Consider the following 133-residue polypeptide: Fatty acid-binding protein, heart (133 aa).

An N-acetylalanine modification is found at alanine 2. A Phosphothreonine modification is found at threonine 8. At tyrosine 20 the chain carries Phosphotyrosine; by Tyr-kinases. Phosphoserine is present on serine 23. Phosphothreonine is present on threonine 30. At serine 83 the chain carries Phosphoserine. 127–129 (RTY) is a binding site for (9Z)-octadecenoate. Residue 127–129 (RTY) coordinates hexadecanoate. Octadecanoate is bound at residue 127–129 (RTY).

This sequence belongs to the calycin superfamily. Fatty-acid binding protein (FABP) family.

It is found in the cytoplasm. Its function is as follows. FABPs are thought to play a role in the intracellular transport of long-chain fatty acids and their acyl-CoA esters. This Mus musculus (Mouse) protein is Fatty acid-binding protein, heart (Fabp3).